The chain runs to 276 residues: Acyl-[acyl-carrier-protein]--UDP-N-acetylglucosamine O-acyltransferase (276 aa).

Belongs to the transferase hexapeptide repeat family. LpxA subfamily. As to quaternary structure, homotrimer.

It localises to the cytoplasm. The enzyme catalyses a (3R)-hydroxyacyl-[ACP] + UDP-N-acetyl-alpha-D-glucosamine = a UDP-3-O-[(3R)-3-hydroxyacyl]-N-acetyl-alpha-D-glucosamine + holo-[ACP]. It participates in glycolipid biosynthesis; lipid IV(A) biosynthesis; lipid IV(A) from (3R)-3-hydroxytetradecanoyl-[acyl-carrier-protein] and UDP-N-acetyl-alpha-D-glucosamine: step 1/6. In terms of biological role, involved in the biosynthesis of lipid A, a phosphorylated glycolipid that anchors the lipopolysaccharide to the outer membrane of the cell. This Gloeothece citriformis (strain PCC 7424) (Cyanothece sp. (strain PCC 7424)) protein is Acyl-[acyl-carrier-protein]--UDP-N-acetylglucosamine O-acyltransferase.